Consider the following 385-residue polypeptide: Leucine aminopeptidase 1 (385 aa).

An N-terminal signal peptide occupies residues 1-14 (MKFLTLALSATATA). Positions 15 to 85 (MIIVNPEQQP…YGTLHTTRVV (71 aa)) are excised as a propeptide. Zn(2+)-binding residues include H185, D204, E243, and D270. The cysteines at positions 319 and 323 are disulfide-linked. A Zn(2+)-binding site is contributed by H352.

This sequence belongs to the peptidase M28 family. M28E subfamily. As to quaternary structure, monomer. Zn(2+) is required as a cofactor.

The protein localises to the secreted. In terms of biological role, extracellular aminopeptidase that allows assimilation of proteinaceous substrates. The polypeptide is Leucine aminopeptidase 1 (lap1) (Penicillium rubens (strain ATCC 28089 / DSM 1075 / NRRL 1951 / Wisconsin 54-1255) (Penicillium chrysogenum)).